We begin with the raw amino-acid sequence, 283 residues long: Plasma membrane ascorbate-dependent reductase CYBRD1 (283 aa).

Topologically, residues 1–5 are cytoplasmic; sequence MEGYK. Residues 6-30 traverse the membrane as a helical segment; the sequence is SFLVFLVSSLLLGFLGVIFTLVWVL. The Cytochrome b561 domain occupies 13–218; it reads SSLLLGFLGV…FGGLVVWMVT (206 aa). Over 31-45 the chain is Extracellular; that stretch reads HWREGLGWDGGAAEF. A helical transmembrane segment spans residues 46-67; sequence NWHPVLVTSGFIFIQGIAIIVY. Residues H48, R68, and K77 each coordinate heme b. Topologically, residues 68-76 are cytoplasmic; that stretch reads RLPWTWNCS. L-ascorbate is bound by residues K77 and K81. The helical transmembrane segment at 77 to 103 threads the bilayer; that stretch reads KLLMKFIHAGLHLTAFVFTIVALVAVF. H84 serves as a coordination point for heme b. The Extracellular portion of the chain corresponds to 104–116; the sequence is DFHNAKNIPNMYS. H106 lines the Fe(3+) pocket. Residues 113–116 and H118 contribute to the heme b site; that span reads NMYS. Residues 117 to 142 traverse the membrane as a helical segment; it reads LHSWIGLTVVILYALQLVLGVSIYLL. Topologically, residues 143–149 are cytoplasmic; it reads PFARDTL. L-ascorbate is bound at residue R150. A helical membrane pass occupies residues 150-177; the sequence is RAALMPVHVYSGLLIFGTVIATALMGIT. 2 residues coordinate heme b: H157 and E178. Topologically, residues 178-195 are extracellular; that stretch reads EKLIFSLKEPPYSKMPPE. A helical transmembrane segment spans residues 196-220; sequence AIFVNTFGLIILVFGGLVVWMVTTP. The Cytoplasmic segment spans residues 221-283; that stretch reads AWKRPREQEI…LDDAGQRSTM (63 aa). K223 serves as a coordination point for heme b. The segment at 234–263 is disordered; the sequence is NPTVSSPDGTEEGSTITDCSNTEKSDVELN. Over residues 235 to 253 the composition is skewed to polar residues; the sequence is PTVSSPDGTEEGSTITDCS. The span at 254–263 shows a compositional bias: basic and acidic residues; the sequence is NTEKSDVELN.

In terms of assembly, homodimer. Heme b is required as a cofactor.

It localises to the cell membrane. It is found in the apical cell membrane. It carries out the reaction Fe(3+)(out) + L-ascorbate(in) = monodehydro-L-ascorbate radical(in) + Fe(2+)(out) + H(+). The enzyme catalyses Cu(2+)(out) + L-ascorbate(in) = Cu(+)(out) + monodehydro-L-ascorbate radical(in) + H(+). The catalysed reaction is monodehydro-L-ascorbate radical(out) + L-ascorbate(in) = monodehydro-L-ascorbate radical(in) + L-ascorbate(out). Functionally, plasma membrane reductase that uses cytoplasmic ascorbate as an electron donor to reduce extracellular Fe(3+) into Fe(2+). It is also able to reduce extracellular monodehydro-L-ascorbate and may be involved in extracellular ascorbate regeneration. May also function as a cupric transmembrane reductase. This is Plasma membrane ascorbate-dependent reductase CYBRD1 (cybrd1) from Xenopus tropicalis (Western clawed frog).